Consider the following 107-residue polypeptide: Glutaredoxin 4 (107 aa).

The region spanning 4 to 106 (LDKIKKQISE…TLLAEVAAKH (103 aa)) is the Glutaredoxin domain. Lys-21 serves as a coordination point for glutathione. Position 29 (Cys-29) interacts with [2Fe-2S] cluster. Residues Arg-58, Phe-70, and 83–84 (CD) each bind glutathione.

The protein belongs to the glutaredoxin family. Monothiol subfamily. Homodimer.

It localises to the cytoplasm. Functionally, monothiol glutaredoxin involved in the biogenesis of iron-sulfur clusters. This is Glutaredoxin 4 (grxD) from Haemophilus influenzae (strain 86-028NP).